A 107-amino-acid chain; its full sequence is Large ribosomal subunit protein uL24 (107 aa).

This sequence belongs to the universal ribosomal protein uL24 family. In terms of assembly, part of the 50S ribosomal subunit.

Functionally, one of two assembly initiator proteins, it binds directly to the 5'-end of the 23S rRNA, where it nucleates assembly of the 50S subunit. One of the proteins that surrounds the polypeptide exit tunnel on the outside of the subunit. This is Large ribosomal subunit protein uL24 from Neisseria meningitidis serogroup C (strain 053442).